A 332-amino-acid chain; its full sequence is Glyceraldehyde-3-phosphate dehydrogenase 2 (332 aa).

NAD(+) is bound by residues 11 to 12, Asp-32, and Arg-77; that span reads RI. D-glyceraldehyde 3-phosphate contacts are provided by residues 148–150, Thr-179, 208–209, and Arg-231; these read SCT and TG. The Nucleophile role is filled by Cys-149. A Phosphotyrosine modification is found at Tyr-273. Residue Thr-274 is modified to Phosphothreonine. Position 313 (Asn-313) interacts with NAD(+).

The protein belongs to the glyceraldehyde-3-phosphate dehydrogenase family. In terms of assembly, homotetramer.

The protein resides in the cytoplasm. The catalysed reaction is D-glyceraldehyde 3-phosphate + phosphate + NAD(+) = (2R)-3-phospho-glyceroyl phosphate + NADH + H(+). It participates in carbohydrate degradation; glycolysis; pyruvate from D-glyceraldehyde 3-phosphate: step 1/5. This Drosophila melanogaster (Fruit fly) protein is Glyceraldehyde-3-phosphate dehydrogenase 2 (Gapdh2).